We begin with the raw amino-acid sequence, 374 residues long: L-serine/homoserine O-acetyltransferase (374 aa).

Residues 46–357 form the AB hydrolase-1 domain; the sequence is AVLVLTGLSP…TPAGHDAFLV (312 aa). Ser149 serves as the catalytic Nucleophile. Residues Asp319 and His352 contribute to the active site.

The protein belongs to the AB hydrolase superfamily. MetX family. Homodimer.

The protein resides in the cytoplasm. The enzyme catalyses L-serine + acetyl-CoA = O-acetyl-L-serine + CoA. The catalysed reaction is L-homoserine + acetyl-CoA = O-acetyl-L-homoserine + CoA. Its pathway is antibiotic biosynthesis. Functionally, involved in the biosynthesis of the antibiotic D-cycloserine (DCS), a cyclic structural analog of D-alanine, used as an antitubercular agent. Catalyzes the transfer of the acetyl group from acetyl-CoA to the hydroxyl group of L-serine to yield the activated serine, O-acetyl-L-serine. It prefers L-serine over L-homoserine. This Streptomyces lavendulae protein is L-serine/homoserine O-acetyltransferase.